Consider the following 82-residue polypeptide: uncharacterized protein (82 aa).

This is an uncharacterized protein from Human herpesvirus 6A (strain Uganda-1102) (HHV-6 variant A).